A 158-amino-acid chain; its full sequence is Probable host range protein 2-1 (158 aa).

This sequence belongs to the poxviridae C7 protein family.

Functionally, plays a role for multiplication of the virus in different cell types. This Oryctolagus cuniculus (Rabbit) protein is Probable host range protein 2-1.